A 304-amino-acid chain; its full sequence is UDP-N-acetylenolpyruvoylglucosamine reductase (304 aa).

The region spanning 34-198 (IGGKADFLVW…LEVVFALRPG (165 aa)) is the FAD-binding PCMH-type domain. Arginine 177 is an active-site residue. Serine 227 acts as the Proton donor in catalysis. Glutamate 297 is an active-site residue.

This sequence belongs to the MurB family. The cofactor is FAD.

It localises to the cytoplasm. It carries out the reaction UDP-N-acetyl-alpha-D-muramate + NADP(+) = UDP-N-acetyl-3-O-(1-carboxyvinyl)-alpha-D-glucosamine + NADPH + H(+). Its pathway is cell wall biogenesis; peptidoglycan biosynthesis. Cell wall formation. This Geobacillus kaustophilus (strain HTA426) protein is UDP-N-acetylenolpyruvoylglucosamine reductase.